Consider the following 595-residue polypeptide: Apolipoprotein N-acyltransferase 2 (595 aa).

Transmembrane regions (helical) follow at residues 30-50 (FLAF…FGFF), 63-83 (LFFH…HWII), 95-115 (VVAI…FPIF), 167-187 (AEIT…YTLF), and 210-230 (FITL…FLFK). The 315-residue stretch at 241–555 (LNVLIVQPDA…AEALSETIDV (315 aa)) folds into the CN hydrolase domain. Glu-293 acts as the Proton acceptor in catalysis. Lys-372 is a catalytic residue. Cys-463 (nucleophile) is an active-site residue. A helical transmembrane segment spans residues 569–589 (LIPWLMLFLTGIYYLNLLIGI).

Belongs to the CN hydrolase family. Apolipoprotein N-acyltransferase subfamily.

The protein resides in the cell inner membrane. It carries out the reaction N-terminal S-1,2-diacyl-sn-glyceryl-L-cysteinyl-[lipoprotein] + a glycerophospholipid = N-acyl-S-1,2-diacyl-sn-glyceryl-L-cysteinyl-[lipoprotein] + a 2-acyl-sn-glycero-3-phospholipid + H(+). It functions in the pathway protein modification; lipoprotein biosynthesis (N-acyl transfer). Its function is as follows. Catalyzes the phospholipid dependent N-acylation of the N-terminal cysteine of apolipoprotein, the last step in lipoprotein maturation. This Leptospira interrogans serogroup Icterohaemorrhagiae serovar Lai (strain 56601) protein is Apolipoprotein N-acyltransferase 2.